Here is a 317-residue protein sequence, read N- to C-terminus: Transaldolase (317 aa).

Lysine 132 (schiff-base intermediate with substrate) is an active-site residue.

It belongs to the transaldolase family. Type 1 subfamily. As to quaternary structure, homodimer.

It is found in the cytoplasm. It carries out the reaction D-sedoheptulose 7-phosphate + D-glyceraldehyde 3-phosphate = D-erythrose 4-phosphate + beta-D-fructose 6-phosphate. Its pathway is carbohydrate degradation; pentose phosphate pathway; D-glyceraldehyde 3-phosphate and beta-D-fructose 6-phosphate from D-ribose 5-phosphate and D-xylulose 5-phosphate (non-oxidative stage): step 2/3. In terms of biological role, transaldolase is important for the balance of metabolites in the pentose-phosphate pathway. In Histophilus somni (strain 129Pt) (Haemophilus somnus), this protein is Transaldolase.